A 200-amino-acid polypeptide reads, in one-letter code: RPW8-like protein 4 (200 aa).

The 157-residue stretch at 1 to 157 folds into the RPW8 domain; it reads MPIAELAVIK…MKAIQVDQWT (157 aa). A helical membrane pass occupies residues 7-29; that stretch reads AVIKTVGGPLIAAALGVGAQVIY. A coiled-coil region spans residues 70–127; sequence REVHESLTRLLEDAKSIIEKYWKLRWSRHVCRKYRYIKKLESIELELVRVAREIQVHQ.

The protein belongs to the plant RPW8 protein family.

Its subcellular location is the membrane. Functionally, probable disease resistance (R) protein. This chain is RPW8-like protein 4 (HR4), found in Arabidopsis thaliana (Mouse-ear cress).